The primary structure comprises 255 residues: Ribonuclease PH (255 aa).

Phosphate is bound by residues R86 and G124–R126.

This sequence belongs to the RNase PH family. As to quaternary structure, homohexameric ring arranged as a trimer of dimers.

It carries out the reaction tRNA(n+1) + phosphate = tRNA(n) + a ribonucleoside 5'-diphosphate. Its function is as follows. Phosphorolytic 3'-5' exoribonuclease that plays an important role in tRNA 3'-end maturation. Removes nucleotide residues following the 3'-CCA terminus of tRNAs; can also add nucleotides to the ends of RNA molecules by using nucleoside diphosphates as substrates, but this may not be physiologically important. Probably plays a role in initiation of 16S rRNA degradation (leading to ribosome degradation) during starvation. The chain is Ribonuclease PH from Geobacillus sp. (strain WCH70).